The chain runs to 589 residues: Probable translation initiation factor IF-2 (589 aa).

Residues 14–229 (LRQPIVCVLG…LAGLAQRFLE (216 aa)) enclose the tr-type G domain. The segment at 23–30 (GHVDHGKT) is G1. A GTP-binding site is contributed by 23–30 (GHVDHGKT). The interval 48–52 (GITQR) is G2. Residues 84-87 (DTPG) are G3. GTP is bound by residues 84–88 (DTPGH) and 138–141 (NKID). The interval 138 to 141 (NKID) is G4. The tract at residues 206-208 (SAK) is G5.

The protein belongs to the TRAFAC class translation factor GTPase superfamily. Classic translation factor GTPase family. IF-2 subfamily.

In terms of biological role, function in general translation initiation by promoting the binding of the formylmethionine-tRNA to ribosomes. Seems to function along with eIF-2. The sequence is that of Probable translation initiation factor IF-2 (infB) from Thermoplasma acidophilum (strain ATCC 25905 / DSM 1728 / JCM 9062 / NBRC 15155 / AMRC-C165).